An 875-amino-acid polypeptide reads, in one-letter code: Protein translocase subunit SecA (875 aa).

ATP is bound by residues Gln-87, 105–109 (GEGKT), and Asp-512. Zn(2+)-binding residues include Cys-860, Cys-862, Cys-871, and His-872.

It belongs to the SecA family. As to quaternary structure, monomer and homodimer. Part of the essential Sec protein translocation apparatus which comprises SecA, SecYEG and auxiliary proteins SecDF-YajC and YidC. Zn(2+) is required as a cofactor.

Its subcellular location is the cell inner membrane. It localises to the cytoplasm. It catalyses the reaction ATP + H2O + cellular proteinSide 1 = ADP + phosphate + cellular proteinSide 2.. Its function is as follows. Part of the Sec protein translocase complex. Interacts with the SecYEG preprotein conducting channel. Has a central role in coupling the hydrolysis of ATP to the transfer of proteins into and across the cell membrane, serving both as a receptor for the preprotein-SecB complex and as an ATP-driven molecular motor driving the stepwise translocation of polypeptide chains across the membrane. The sequence is that of Protein translocase subunit SecA from Buchnera aphidicola subsp. Acyrthosiphon pisum (strain 5A).